The primary structure comprises 671 residues: Probable potassium transport system protein Kup 2 (671 aa).

Helical transmembrane passes span 18–38 (GFLI…LYAM), 60–80 (VSLV…LIAL), 103–123 (WLIV…ALTP), 149–169 (VTTL…ASLV), 173–193 (FGPI…INSF), 218–238 (AGFF…ALYS), 252–272 (WPFV…WLLA), 292–312 (MVIY…QALI), 343–363 (LYIP…VLYF), 373–393 (YSLA…YFLI), 402–422 (IAFI…ASLV), and 424–444 (FING…VMFI).

Belongs to the HAK/KUP transporter (TC 2.A.72) family.

The protein localises to the cell membrane. It catalyses the reaction K(+)(in) + H(+)(in) = K(+)(out) + H(+)(out). Functionally, transport of potassium into the cell. Likely operates as a K(+):H(+) symporter. This Lactococcus lactis subsp. cremoris (strain MG1363) protein is Probable potassium transport system protein Kup 2.